Consider the following 493-residue polypeptide: Adenylyltransferase and sulfurtransferase uba4 (493 aa).

ATP is bound by residues Gly-99, Asp-120, 127–131 (SNLHR), Lys-144, and 188–189 (DN). The Zn(2+) site is built by Cys-237 and Cys-240. Cys-254 (glycyl thioester intermediate; for adenylyltransferase activity) is an active-site residue. The Zn(2+) site is built by Cys-316 and Cys-319. In terms of domain architecture, Rhodanese spans 376–491 (INKEPTIIDV…WREQIDPDWP (116 aa)). Cys-446 (cysteine persulfide intermediate; for sulfurtransferase activity) is an active-site residue.

In the N-terminal section; belongs to the HesA/MoeB/ThiF family. UBA4 subfamily. The cofactor is Zn(2+).

It localises to the cytoplasm. It is found in the cytosol. The catalysed reaction is [molybdopterin-synthase sulfur-carrier protein]-C-terminal Gly-Gly + ATP + H(+) = [molybdopterin-synthase sulfur-carrier protein]-C-terminal Gly-Gly-AMP + diphosphate. It carries out the reaction [molybdopterin-synthase sulfur-carrier protein]-C-terminal Gly-Gly-AMP + S-sulfanyl-L-cysteinyl-[cysteine desulfurase] + AH2 = [molybdopterin-synthase sulfur-carrier protein]-C-terminal-Gly-aminoethanethioate + L-cysteinyl-[cysteine desulfurase] + A + AMP + 2 H(+). It functions in the pathway tRNA modification; 5-methoxycarbonylmethyl-2-thiouridine-tRNA biosynthesis. Its pathway is cofactor biosynthesis; molybdopterin biosynthesis. Its function is as follows. Plays a central role in 2-thiolation of mcm(5)S(2)U at tRNA wobble positions of cytosolic tRNA(Lys), tRNA(Glu) and tRNA(Gln). Also essential during biosynthesis of the molybdenum cofactor. Acts by mediating the C-terminal thiocarboxylation of sulfur carriers urm1 and mocs2a. Its N-terminus first activates urm1 and mocs2a as acyl-adenylates (-COAMP), then the persulfide sulfur on the catalytic cysteine is transferred to urm1 and mocs2a to form thiocarboxylation (-COSH) of their C-terminus. The reaction probably involves hydrogen sulfide that is generated from the persulfide intermediate and that acts as a nucleophile towards urm1 and mocs2a. Subsequently, a transient disulfide bond is formed. Does not use thiosulfate as sulfur donor; nfs1 probably acting as a sulfur donor for thiocarboxylation reactions. The sequence is that of Adenylyltransferase and sulfurtransferase uba4 from Aspergillus fumigatus (strain ATCC MYA-4609 / CBS 101355 / FGSC A1100 / Af293) (Neosartorya fumigata).